A 341-amino-acid polypeptide reads, in one-letter code: ATPase GET3 (341 aa).

Lysine 34 to threonine 41 contacts ATP. Aspartate 63 is a catalytic residue. 2 residues coordinate ATP: glutamate 245 and asparagine 272. 2 residues coordinate Zn(2+): cysteine 283 and cysteine 286.

It belongs to the arsA ATPase family. As to quaternary structure, homodimer.

The protein resides in the cytoplasm. The protein localises to the endoplasmic reticulum. Functionally, ATPase required for the post-translational delivery of tail-anchored (TA) proteins to the endoplasmic reticulum. Recognizes and selectively binds the transmembrane domain of TA proteins in the cytosol. This complex then targets to the endoplasmic reticulum by membrane-bound receptors, where the tail-anchored protein is released for insertion. This process is regulated by ATP binding and hydrolysis. ATP binding drives the homodimer towards the closed dimer state, facilitating recognition of newly synthesized TA membrane proteins. ATP hydrolysis is required for insertion. Subsequently, the homodimer reverts towards the open dimer state, lowering its affinity for the membrane-bound receptor, and returning it to the cytosol to initiate a new round of targeting. This chain is ATPase GET3, found in Paracoccidioides lutzii (strain ATCC MYA-826 / Pb01) (Paracoccidioides brasiliensis).